A 410-amino-acid polypeptide reads, in one-letter code: Dual-specificity RNA methyltransferase RlmN (410 aa).

Glu123 functions as the Proton acceptor in the catalytic mechanism. The Radical SAM core domain occupies 129 to 378; it reads EEGRGTLCIS…IRTPRGRDIL (250 aa). A disulfide bond links Cys136 and Cys381. Residues Cys143, Cys147, and Cys150 each contribute to the [4Fe-4S] cluster site. S-adenosyl-L-methionine is bound by residues 207-208, Ser239, 261-263, and Asn338; these read GE and SLH. The S-methylcysteine intermediate role is filled by Cys381.

The protein belongs to the radical SAM superfamily. RlmN family. [4Fe-4S] cluster serves as cofactor.

It localises to the cytoplasm. It catalyses the reaction adenosine(2503) in 23S rRNA + 2 reduced [2Fe-2S]-[ferredoxin] + 2 S-adenosyl-L-methionine = 2-methyladenosine(2503) in 23S rRNA + 5'-deoxyadenosine + L-methionine + 2 oxidized [2Fe-2S]-[ferredoxin] + S-adenosyl-L-homocysteine. The enzyme catalyses adenosine(37) in tRNA + 2 reduced [2Fe-2S]-[ferredoxin] + 2 S-adenosyl-L-methionine = 2-methyladenosine(37) in tRNA + 5'-deoxyadenosine + L-methionine + 2 oxidized [2Fe-2S]-[ferredoxin] + S-adenosyl-L-homocysteine. Specifically methylates position 2 of adenine 2503 in 23S rRNA and position 2 of adenine 37 in tRNAs. m2A2503 modification seems to play a crucial role in the proofreading step occurring at the peptidyl transferase center and thus would serve to optimize ribosomal fidelity. The protein is Dual-specificity RNA methyltransferase RlmN of Mesorhizobium japonicum (strain LMG 29417 / CECT 9101 / MAFF 303099) (Mesorhizobium loti (strain MAFF 303099)).